A 215-amino-acid polypeptide reads, in one-letter code: Cytochrome b6 (215 aa).

The helical transmembrane segment at 32–52 threads the bilayer; it reads IFHCLGGITLTCFLVQVATGF. Cys-35 contacts heme c. Heme b is bound by residues His-86 and His-100. 3 helical membrane-spanning segments follow: residues 90–110, 116–136, and 186–206; these read ASMM…TGGF, LTWV…VTGY, and LHTF…FSMI. Heme b-binding residues include His-187 and His-202.

This sequence belongs to the cytochrome b family. PetB subfamily. As to quaternary structure, the 4 large subunits of the cytochrome b6-f complex are cytochrome b6, subunit IV (17 kDa polypeptide, PetD), cytochrome f and the Rieske protein, while the 4 small subunits are PetG, PetL, PetM and PetN. The complex functions as a dimer. Heme b is required as a cofactor. It depends on heme c as a cofactor.

Its subcellular location is the plastid. It localises to the chloroplast thylakoid membrane. Functionally, component of the cytochrome b6-f complex, which mediates electron transfer between photosystem II (PSII) and photosystem I (PSI), cyclic electron flow around PSI, and state transitions. This chain is Cytochrome b6, found in Nymphaea alba (White water-lily).